Here is a 198-residue protein sequence, read N- to C-terminus: Large ribosomal subunit protein bL25 (198 aa).

This sequence belongs to the bacterial ribosomal protein bL25 family. CTC subfamily. As to quaternary structure, part of the 50S ribosomal subunit; part of the 5S rRNA/L5/L18/L25 subcomplex. Contacts the 5S rRNA. Binds to the 5S rRNA independently of L5 and L18.

This is one of the proteins that binds to the 5S RNA in the ribosome where it forms part of the central protuberance. The chain is Large ribosomal subunit protein bL25 from Nitrosomonas europaea (strain ATCC 19718 / CIP 103999 / KCTC 2705 / NBRC 14298).